The sequence spans 372 residues: Cytochrome b (372 aa).

A run of 4 helical transmembrane segments spans residues 25 to 45 (FGSM…FLAI), 69 to 90 (WIMQ…YIHI), 105 to 125 (WLSG…GYVL), and 170 to 190 (FFAL…IHII). Residues His75 and His89 each contribute to the heme b site. 2 residues coordinate heme b: His174 and His188. Residue His193 participates in a ubiquinone binding. 4 helical membrane-spanning segments follow: residues 218-238 (YKDM…LSFS), 280-300 (LGGT…PFTH), 312-332 (LTQT…WTAT), and 339-358 (FISI…IINP).

Belongs to the cytochrome b family. The cytochrome bc1 complex contains 3 respiratory subunits (MT-CYB, CYC1 and UQCRFS1), 2 core proteins (UQCRC1 and UQCRC2) and probably 6 low-molecular weight proteins. Heme b is required as a cofactor.

It localises to the mitochondrion inner membrane. Functionally, component of the ubiquinol-cytochrome c reductase complex (complex III or cytochrome b-c1 complex) that is part of the mitochondrial respiratory chain. The b-c1 complex mediates electron transfer from ubiquinol to cytochrome c. Contributes to the generation of a proton gradient across the mitochondrial membrane that is then used for ATP synthesis. The chain is Cytochrome b (MT-CYB) from Dendroaspis polylepis polylepis (Black mamba).